Here is a 183-residue protein sequence, read N- to C-terminus: DELTA-miturgitoxin-Cp1b (183 aa).

Positions 1–20 (MKFSLFFSVFFLAVLHACLS) are cleaved as a signal peptide. The propeptide occupies 21–47 (ESEIDLEDEEHFMSSDSFLSEIQDESR). Positions 44 to 47 (DESR) match the Processing quadruplet motif motif. 8 disulfide bridges follow: cysteine 51/cysteine 66, cysteine 58/cysteine 75, cysteine 65/cysteine 88, cysteine 77/cysteine 86, cysteine 115/cysteine 130, cysteine 122/cysteine 139, cysteine 129/cysteine 157, and cysteine 141/cysteine 155. A predicted alpha-helix region spans residues 164-177 (QAIEGALRIAKKLI). The residue at position 181 (tryptophan 181) is a Tryptophan amide.

It belongs to the neurotoxin 19 (CSTX) family. Double-CSTX subfamily. Cleavage of the propeptide depends on the processing quadruplet motif (XXXR, with at least one of X being E). Expressed by the venom gland.

The protein localises to the secreted. It is found in the target cell membrane. Functionally, spider venom toxin that exhibits cytolytic activity by forming an alpha-helix across the membrane. Lethal to insect larvae. Causes instant paralysis and death in the larvae of the flesh fly (S.carnaria) at doses of 20 ug/g, at doses of less than 10 ug/g causes reversible paralysis. Has cytolytic activity against insect Sf9 cells. Causes stable and irreversible depolarization of fly muscle fibers, leading to contracture at higher toxin concentrations. Destabilizes membranes. In Cheiracanthium punctorium (Yellow sac spider), this protein is DELTA-miturgitoxin-Cp1b.